We begin with the raw amino-acid sequence, 1003 residues long: MIMTVSDPGGSSMSSSSAITPESEQAMAAVNDAPVGGQLLQQRLALVEDLWQTVLRSECPAEQAERLLRMKQLSDPVLPEGNAVSSDALVSLIRDMDLSEAIAAARAFSLYFQLVNILEQRIEEDGYLESIVRSQDTAEQINPFTPPLATQTEPATFRELFERLRRLNVPPAQLETLLQELDIRLVFTAHPTEIVRHTVRHKQRRVASLLQQLEAQTESSTFEAGTIRLQLEEEIRLWWRTDELHQFKPSVLDEVDYALHYFQQVLFDAMPQLRRRLSSALASSYPDVQLPPSSFCTFGSWVGSDRDGNPSVTTDITWRTACYQRQLMLERYVSAVQGLRDQLSISMQWSQVSAPLLESLEMDRLRFPEVYEERATRYRLEPYRLKLSFVLERLRLTQIRNQQLAEAGWRAPADGLLSSNPEAPQSESLHYGSVAEFRSDLELIRTSLVSTDLTCEPLDTLLTQVHIFGFSLAGLDIRQESTRHSDALDEVSRYLNPDQAYGDLNEQERVQWLLQELQTRRPLIPPSVSWSPTTEETVDVFRTLHRLQDEFGSRICRTYVISMSHSVSDLLEVLLLSKEAGLVEPSAGHADLLVVPLFETVEDLQRAPEVMEELFQTPLYRNLLPRVGSQGQPLQELMLGYSDSNKDSGFLSSNWEIHKAQIALQDLAARNGVALRLFHGRGGSVGRGGGPAYQAILAQPSGTLQGRIKITEQGEVLASKYSLPELALYNLETVSTAVVQNSLVTNQLDATPSWNDLMARLARCSRRHYRALVHDNPDLVAFFEQVTPIEEISKLQISSRPARRKTGTRDLSSLRAIPWVFGWTQSRFLLPSWFGVGTALHEELVNDPDQMSLLRTLHQRWPFFRMLISKVEMTLSKVDLDLARHYVTSLGSADHRQAFDGIYTTIAEEYSLTHRLVLEITGQERLLDADPALQLSVDLRNRTIVPLGFLQVALLRRLRDQNRQPPMSESPSDGDGRTYSRSELLRGALLTINGIAAGMRNTG.

Residues 1–24 (MIMTVSDPGGSSMSSSSAITPESE) form a disordered region. Catalysis depends on residues His190 and Lys646.

It belongs to the PEPCase type 1 family. The cofactor is Mg(2+).

The catalysed reaction is oxaloacetate + phosphate = phosphoenolpyruvate + hydrogencarbonate. In terms of biological role, forms oxaloacetate, a four-carbon dicarboxylic acid source for the tricarboxylic acid cycle. This Synechococcus sp. (strain WH7803) protein is Phosphoenolpyruvate carboxylase.